We begin with the raw amino-acid sequence, 222 residues long: Small ribosomal subunit protein uS3 (222 aa).

The 70-residue stretch at 39–108 folds into the KH type-2 domain; the sequence is IRKFIKKELF…NVLINIVEVK (70 aa).

The protein belongs to the universal ribosomal protein uS3 family. As to quaternary structure, part of the 30S ribosomal subunit. Forms a tight complex with proteins S10 and S14.

In terms of biological role, binds the lower part of the 30S subunit head. Binds mRNA in the 70S ribosome, positioning it for translation. The chain is Small ribosomal subunit protein uS3 from Clostridium perfringens (strain ATCC 13124 / DSM 756 / JCM 1290 / NCIMB 6125 / NCTC 8237 / Type A).